The following is a 556-amino-acid chain: Formate--tetrahydrofolate ligase (556 aa).

ATP is bound at residue 65 to 72; sequence TPAGEGKS.

The protein belongs to the formate--tetrahydrofolate ligase family.

It catalyses the reaction (6S)-5,6,7,8-tetrahydrofolate + formate + ATP = (6R)-10-formyltetrahydrofolate + ADP + phosphate. It functions in the pathway one-carbon metabolism; tetrahydrofolate interconversion. This Streptococcus pneumoniae (strain Taiwan19F-14) protein is Formate--tetrahydrofolate ligase.